The primary structure comprises 373 residues: P2Y purinoceptor 1 (373 aa).

At 1 to 51 the chain is on the extracellular side; sequence MTEVLWPAVPNGTDAAFLAGPGSSWGNSTVASTAAVSSSFKCALTKTGFQF. N-linked (GlcNAc...) asparagine glycosylation is found at Asn11 and Asn27. Disulfide bonds link Cys42/Cys296 and Cys124/Cys202. ADP is bound at residue Lys46. A helical membrane pass occupies residues 52–74; that stretch reads YYLPAVYILVFIIGFLGNSVAIW. The Cytoplasmic portion of the chain corresponds to 75 to 87; the sequence is MFVFHMKPWSGIS. The helical transmembrane segment at 88–109 threads the bilayer; it reads VYMFNLALADFLYVLTLPALIF. The Extracellular segment spans residues 110 to 125; the sequence is YYFNKTDWIFGDAMCK. N-linked (GlcNAc...) asparagine glycosylation is present at Asn113. A helical transmembrane segment spans residues 126-147; that stretch reads LQRFIFHVNLYGSILFLTCISA. Over 148–166 the chain is Cytoplasmic; the sequence is HRYSGVVYPLKSLGRLKKK. Residues 167-188 form a helical membrane-spanning segment; that stretch reads NAICISVLVWLIVVVAISPILF. Over 189–214 the chain is Extracellular; it reads YSGTGVRKNKTITCYDTTSDEYLRSY. N-linked (GlcNAc...) asparagine glycosylation is present at Asn197. 203–205 lines the ADP pocket; that stretch reads YDT. The helical transmembrane segment at 215-237 threads the bilayer; that stretch reads FIYSMCTTVAMFCVPLVLILGCY. The Cytoplasmic segment spans residues 238–260; sequence GLIVRALIYKDLDNSPLRRKSIY. A helical membrane pass occupies residues 261-284; that stretch reads LVIIVLTVFAVSYIPFHVMKTMNL. ADP is bound by residues 283-287, 303-306, and Arg310; these read NLRAR and YATY. The Extracellular portion of the chain corresponds to 285–303; the sequence is RARLDFQTPAMCAFNDRVY. The chain crosses the membrane as a helical span at residues 304 to 325; it reads ATYQVTRGLASLNSCVDPILYF. At 326–373 the chain is on the cytoplasmic side; it reads LAGDTFRRRLSRATRKASRRSEANLQSKSEDMTLNILPEFKQNGDTSL.

This sequence belongs to the G-protein coupled receptor 1 family.

The protein resides in the cell membrane. Its activity is regulated as follows. ATP functions as antagonist and inhibits ADP-induced mobilization of Ca(2+). The P2Y1 receptor-specific antagonists A3P5PS, A3P5P and A2P5P inhibit downstream signaling mediated by mobilization of Ca(2+) from intracellular stores, and platelet shape changes in response to extracellular ADP. Functionally, receptor for extracellular adenine nucleotides such as ADP. In platelets, binding to ADP leads to mobilization of intracellular calcium ions via activation of phospholipase C, a change in platelet shape, and ultimately platelet aggregation. The sequence is that of P2Y purinoceptor 1 (P2RY1) from Homo sapiens (Human).